We begin with the raw amino-acid sequence, 213 residues long: Nucleoside triphosphate pyrophosphatase (213 aa).

Asp79 acts as the Proton acceptor in catalysis.

It belongs to the Maf family. A divalent metal cation is required as a cofactor.

Its subcellular location is the cytoplasm. It catalyses the reaction a ribonucleoside 5'-triphosphate + H2O = a ribonucleoside 5'-phosphate + diphosphate + H(+). It carries out the reaction a 2'-deoxyribonucleoside 5'-triphosphate + H2O = a 2'-deoxyribonucleoside 5'-phosphate + diphosphate + H(+). In terms of biological role, nucleoside triphosphate pyrophosphatase. May have a dual role in cell division arrest and in preventing the incorporation of modified nucleotides into cellular nucleic acids. This is Nucleoside triphosphate pyrophosphatase from Mycobacterium leprae (strain Br4923).